A 147-amino-acid chain; its full sequence is Large ribosomal subunit protein bL9 (147 aa).

This sequence belongs to the bacterial ribosomal protein bL9 family.

Binds to the 23S rRNA. The sequence is that of Large ribosomal subunit protein bL9 from Exiguobacterium sp. (strain ATCC BAA-1283 / AT1b).